A 121-amino-acid polypeptide reads, in one-letter code: uncharacterized protein (121 aa).

The interval 101-121 (TVVKKEDVRESPVDTFMENAT) is disordered. Over residues 102–112 (VVKKEDVRESP) the composition is skewed to basic and acidic residues.

This is an uncharacterized protein from Schizosaccharomyces pombe (strain 972 / ATCC 24843) (Fission yeast).